Reading from the N-terminus, the 481-residue chain is Protein DETOXIFICATION 12 (481 aa).

The next 12 membrane-spanning stretches (helical) occupy residues 38-58, 76-96, 117-137, 154-174, 187-207, 214-234, 267-287, 296-316, 336-356, 380-400, 415-435, and 438-458; these read LIFF…LQIV, LASS…SCAL, YTAM…WFNM, AGKY…LQPL, LLIT…FLVY, LGGA…LGSF, AAMI…SGLL, VLSV…AIAA, IVVY…SMSL, MAPL…LSGI, LGAF…WIHL, and VGLW…LALV.

The protein belongs to the multi antimicrobial extrusion (MATE) (TC 2.A.66.1) family.

It is found in the membrane. This Arabidopsis thaliana (Mouse-ear cress) protein is Protein DETOXIFICATION 12.